The sequence spans 148 residues: Ubiquitin conjugating enzyme E2 B (148 aa).

The 147-residue stretch at Ala-2 to Lys-148 folds into the UBC core domain. The active-site Glycyl thioester intermediate is the Cys-87.

The protein belongs to the ubiquitin-conjugating enzyme family. As to quaternary structure, interacts with mkkA (via F-box/WD40 repeat domains).

It carries out the reaction S-ubiquitinyl-[E1 ubiquitin-activating enzyme]-L-cysteine + [E2 ubiquitin-conjugating enzyme]-L-cysteine = [E1 ubiquitin-activating enzyme]-L-cysteine + S-ubiquitinyl-[E2 ubiquitin-conjugating enzyme]-L-cysteine.. It participates in protein modification; protein ubiquitination. Its function is as follows. Involved in protein ubiquitination and degradation during development. Mediates protein ubiquitination at the mound and finger stage required for subsequent development and may be an essential component of the developmental transition between the induction of postaggregative gene expression and subsequent cell-type differentiation and morphogenesis. ubcB and ubpB differentially control ubiquitination/deubiquitination and degradation of mkkA protein in a cell-type-specific and temporally regulated manner. The chain is Ubiquitin conjugating enzyme E2 B (ubcB) from Dictyostelium discoideum (Social amoeba).